An 855-amino-acid polypeptide reads, in one-letter code: DNA mismatch repair protein MutS (855 aa).

615–622 lines the ATP pocket; the sequence is GPNMGGKS.

This sequence belongs to the DNA mismatch repair MutS family.

Its function is as follows. This protein is involved in the repair of mismatches in DNA. It is possible that it carries out the mismatch recognition step. This protein has a weak ATPase activity. The sequence is that of DNA mismatch repair protein MutS from Aliivibrio salmonicida (strain LFI1238) (Vibrio salmonicida (strain LFI1238)).